A 325-amino-acid polypeptide reads, in one-letter code: Tetraacyldisaccharide 4'-kinase (325 aa).

55-62 lines the ATP pocket; that stretch reads TAGGNGKT.

The protein belongs to the LpxK family.

It catalyses the reaction a lipid A disaccharide + ATP = a lipid IVA + ADP + H(+). It functions in the pathway glycolipid biosynthesis; lipid IV(A) biosynthesis; lipid IV(A) from (3R)-3-hydroxytetradecanoyl-[acyl-carrier-protein] and UDP-N-acetyl-alpha-D-glucosamine: step 6/6. Its function is as follows. Transfers the gamma-phosphate of ATP to the 4'-position of a tetraacyldisaccharide 1-phosphate intermediate (termed DS-1-P) to form tetraacyldisaccharide 1,4'-bis-phosphate (lipid IVA). The chain is Tetraacyldisaccharide 4'-kinase from Enterobacter sp. (strain 638).